The following is a 403-amino-acid chain: Microtubule-associated protein tau (403 aa).

Residues 1–32 show a composition bias toward basic and acidic residues; the sequence is MAEPRQEFDVMEDHAQGDYTLQDHEGDMEPGL. Positions 1–219 are disordered; the sequence is MAEPRQEFDV…GPMPDLKNVK (219 aa). At alanine 2 the chain carries N-acetylalanine. The residue at position 19 (tyrosine 19) is a Phosphotyrosine. A Glycyl lysine isopeptide (Lys-Gly) (interchain with G-Cter in ubiquitin) cross-link involves residue lysine 33. Serine 35 and serine 50 each carry phosphoserine. The span at 50 to 60 shows a compositional bias: polar residues; it reads SETSDAKSTPT. 3 positions are modified to phosphothreonine: threonine 58, threonine 60, and threonine 71. Residues 90-106 show a composition bias toward basic and acidic residues; it reads KGKDGTGPDDKKAKGAD. Position 115 is a phosphothreonine (threonine 115). Arginine 117 is modified (omega-N-methylarginine). The residue at position 125 (lysine 125) is an N6,N6-dimethyllysine; alternate. Lysine 125 is modified (N6-acetyllysine; alternate). Threonine 131, threonine 137, threonine 138, and threonine 143 each carry phosphothreonine. Positions 136 to 147 are enriched in low complexity; sequence KTTPTPKTSPGT. Serine 153 and serine 157 each carry phosphoserine. Positions 156–176 are enriched in low complexity; that stretch reads RSGYSSPGSPGTPGSRSRTPS. Residue tyrosine 159 is modified to Phosphotyrosine. Phosphoserine is present on residues serine 160, serine 161, and serine 164. Threonine 167 and threonine 174 each carry phosphothreonine. The residue at position 176 (serine 176) is a Phosphoserine. Residue threonine 179 is modified to Phosphothreonine. Residue lysine 187 is modified to N6-acetyllysine. A Phosphothreonine modification is found at threonine 193. A phosphoserine mark is found at serine 197 and serine 199. Tau/MAP repeat units lie at residues 206–236, 237–267, 268–298, and 299–330; these read QAAP…GGGK, VQII…GGGS, VQIV…GGGQ, and VEVK…GGGN. Lysine 216 participates in a covalent cross-link: Glycyl lysine isopeptide (Lys-Gly) (interchain with G-Cter in ubiquitin). Position 221 is an N6-acetyllysine; alternate (lysine 221). Lysine 221 carries the post-translational modification N6-methyllysine; alternate. Lysine 221 is covalently cross-linked (Glycyl lysine isopeptide (Lys-Gly) (interchain with G-Cter in ubiquitin); alternate). Serine 224 carries the post-translational modification Phosphoserine. A Glycyl lysine isopeptide (Lys-Gly) (interchain with G-Cter in ubiquitin) cross-link involves residue lysine 229. Lysine 243 is subject to N6-acetyllysine; alternate. Lysine 243 is covalently cross-linked (Glycyl lysine isopeptide (Lys-Gly) (interchain with G-Cter in ubiquitin); alternate). 2 positions are modified to phosphoserine: serine 247 and serine 251. The residue at position 252 (lysine 252) is an N6-acetyllysine. Cysteine 253 and cysteine 284 are oxidised to a cystine. Residue serine 255 is modified to Phosphoserine. Position 260 is an N6-acetyllysine; alternate (lysine 260). A Glycyl lysine isopeptide (Lys-Gly) (interchain with G-Cter in ubiquitin); alternate cross-link involves residue lysine 260. Serine 267 is subject to Phosphoserine. The residue at position 273 (lysine 273) is an N6,N6-dimethyllysine; alternate. An N6-acetyllysine; alternate mark is found at lysine 273, lysine 279, and lysine 283. Glycyl lysine isopeptide (Lys-Gly) (interchain with G-Cter in ubiquitin); alternate cross-links involve residues lysine 273, lysine 279, and lysine 283. A Phosphoserine modification is found at serine 286. 3 positions are modified to N6-acetyllysine; alternate: lysine 293, lysine 305, and lysine 309. Glycyl lysine isopeptide (Lys-Gly) (interchain with G-Cter in ubiquitin); alternate cross-links involve residues lysine 293, lysine 305, and lysine 309. Arginine 311 carries the omega-N-methylarginine modification. Serine 314 bears the Phosphoserine mark. A Glycyl lysine isopeptide (Lys-Gly) (interchain with G-Cter in ubiquitin) cross-link involves residue lysine 315. Serine 318 is subject to Phosphoserine. At lysine 331 the chain carries N6-acetyllysine; alternate. Lysine 331 is covalently cross-linked (Glycyl lysine isopeptide (Lys-Gly) (interchain with G-Cter in ubiquitin); alternate). Lysine 337 is covalently cross-linked (Glycyl lysine isopeptide (Lys-Gly) (interchain with G-Cter in ubiquitin)). Lysine 347 carries the N6-acetyllysine; alternate modification. Lysine 347 participates in a covalent cross-link: Glycyl lysine isopeptide (Lys-Gly) (interchain with G-Cter in ubiquitin); alternate. Position 356 is a phosphotyrosine (tyrosine 356). A phosphoserine mark is found at serine 358 and serine 362. Positions 360–379 are disordered; that stretch reads VVSGDTSPRHLSNVSSTGSI. Residues 363-378 are compositionally biased toward polar residues; it reads GDTSPRHLSNVSSTGS. The residue at position 365 (threonine 365) is a Phosphothreonine. Residues serine 366, serine 371, serine 378, and serine 384 each carry the phosphoserine modification. Phosphothreonine is present on threonine 389.

Interacts with MARK1, MARK2, MARK3 and MARK4. Interacts with SQSTM1 when polyubiquitinated. Interacts with PSMC2 through SQSTM1. Interacts with FKBP4. Binds to CSNK1D. Interacts with SGK1. Interacts with PIN1. Interacts with LRRK2. Interacts with LRP1, leading to endocytosis; this interaction is reduced in the presence of LRPAP1/RAP. Polyubiquitinated. Requires functional TRAF6 and may provoke SQSTM1-dependent degradation by the proteasome. Post-translationally, phosphorylation at various serine and threonine residues in S-P or T-P motifs by proline-directed protein kinases (PDPK1, CDK1, CDK5, GSK3, MAPK) (a few sites per protein in interphase, more in mitosis), and at serine residues in K-X-G-S motifs by MAP/microtubule affinity-regulating kinase (MARK1, MARK2, MARK3, MARK4), causing detachment from microtubules, and their disassembly. Phosphorylation at Ser-224 by BRSK1 and BRSK2 in neurons affects ability to bind microtubules and plays a role in neuron polarization. Phosphorylated by PHK. Dephosphorylation at several serine and threonine residues by the serine/threonine phosphatase PPP5C. In terms of tissue distribution, expressed in neurons.

It is found in the cytoplasm. The protein resides in the cytosol. It localises to the cell membrane. The protein localises to the cytoskeleton. Its subcellular location is the cell projection. It is found in the axon. The protein resides in the dendrite. Promotes microtubule assembly and stability, and might be involved in the establishment and maintenance of neuronal polarity. The C-terminus binds axonal microtubules while the N-terminus binds neural plasma membrane components, suggesting that tau functions as a linker protein between both. Axonal polarity is predetermined by tau localization (in the neuronal cell) in the domain of the cell body defined by the centrosome. The short isoforms allow plasticity of the cytoskeleton whereas the longer isoforms may preferentially play a role in its stabilization. The polypeptide is Microtubule-associated protein tau (MAPT) (Capra hircus (Goat)).